The sequence spans 377 residues: MTHDLAASGLRFGIEEEFFLLDASDLDIVRSAPAGFVAACRDTLGEHFAEEMFECQVEVASPVFSTLAEAARFHGQARQRLAHLAMDFGLRSLCVGTHPFADWRRARSNPAAHFARLFEDQGRVARRSLVCGLHVHVEIPPSHDRMAVLQRVLPWLPLLLALSASSPFRGGRRSGLASYRRALCGEWPRMNIPPALPDEDAYRRHLALLRETGCIREDGQVWWMIRPSSHVPTLELRICDACPRLADALSLAGLFRALVGEALDADPRALPVARDACLEENYWQALRYGCAGRYLVEGRCVGAGDWLEMAWRQCRPQARRGNEWAYQHACGLLEETSAARQLRRYRRLREAGQERHPALRRLVEELLEENLQPALAG.

It belongs to the glutamate--cysteine ligase type 2 family. YbdK subfamily.

The enzyme catalyses L-cysteine + L-glutamate + ATP = gamma-L-glutamyl-L-cysteine + ADP + phosphate + H(+). ATP-dependent carboxylate-amine ligase which exhibits weak glutamate--cysteine ligase activity. The sequence is that of Putative glutamate--cysteine ligase 2 from Pseudomonas aeruginosa (strain LESB58).